The primary structure comprises 412 residues: uncharacterized protein (412 aa).

The protein belongs to the PQQ oxidoreductase GdhB family. Pyrroloquinoline quinone is required as a cofactor.

This is an uncharacterized protein from Synechocystis sp. (strain ATCC 27184 / PCC 6803 / Kazusa).